Reading from the N-terminus, the 236-residue chain is RNA-binding protein 24 (236 aa).

The RRM domain maps to 11-88 (TKIFVGGLPY…RKANVNLAYL (78 aa)). Residues 175–199 (QYPYAASPAAAGYVTAGGYGYAVQQ) are necessary for interaction with EIF4E.

As to quaternary structure, interacts with EIF4E; this interaction prevents EIF4E from binding to p53/TP53 mRNA and inhibits the assembly of translation initiation complex. (Microbial infection) Interacts with HCV mature core protein; this interaction, which enhances the interaction of Core with 5'-UTR may favor viral replication over translation. In terms of assembly, (Microbial infection) Interacts with HCV Serine protease/helicase NS3. As to expression, expressed in fetal and adult heart and skeletal muscles.

The protein localises to the nucleus. It is found in the cytoplasm. Functionally, multifunctional RNA-binding protein involved in the regulation of pre-mRNA splicing, mRNA stability and mRNA translation important for cell fate decision and differentiation. Plays a major role in pre-mRNA alternative splicing regulation. Mediates preferentially muscle-specific exon inclusion in numerous mRNAs important for striated cardiac and skeletal muscle cell differentiation. Binds to intronic splicing enhancer (ISE) composed of stretches of GU-rich motifs localized in flanking intron of exon that will be included by alternative splicing. Involved in embryonic stem cell (ESC) transition to cardiac cell differentiation by promoting pre-mRNA alternative splicing events of several pluripotency and/or differentiation genes. Plays a role in the regulation of mRNA stability. Binds to 3'-untranslated region (UTR) AU-rich elements in target transcripts, such as CDKN1A and MYOG, leading to maintain their stabilities. Involved in myogenic differentiation by regulating MYOG levels. Binds to multiple regions in the mRNA 3'-UTR of TP63 isoform 2, hence inducing its destabilization. Also promotes the destabilization of the CHRM2 mRNA via its binding to a region in the coding sequence. Plays a role in the regulation of mRNA translation. Mediates repression of p53/TP53 mRNA translation through its binding to U-rich element in the 3'-UTR, hence preventing EIF4E from binding to p53/TP53 mRNA and translation initiation. Binds to a huge amount of mRNAs. Required for embryonic heart development, sarcomer and M-band formation in striated muscles. Together with RBM20, promotes the expression of short isoforms of PDLIM5/ENH in cardiomyocytes. In terms of biological role, (Microbial infection) Promotes hepatitis C virus (HCV) replication over translation through the inhibition of viral protein expression. Decreases viral translation by linking viral 5'- and 3'-UTRs, blocking 80S ribosome assembly on the viral IRES and enhancing the interaction of the mature core protein and 5'-UTR. This chain is RNA-binding protein 24, found in Homo sapiens (Human).